Consider the following 518-residue polypeptide: Nicotine N-demethylase CYP82E3 (518 aa).

A helical membrane pass occupies residues 2–22; it reads VFPVEAIVGLVTFTFLFYFLW. Residue Lys254 forms a Glycyl lysine isopeptide (Lys-Gly) (interchain with G-Cter in ubiquitin) linkage. Cys458 contributes to the heme binding site.

This sequence belongs to the cytochrome P450 family. CYP82E2 subfamily. It depends on heme as a cofactor. Expressed in leaves.

It localises to the membrane. The catalysed reaction is (S)-nicotine + reduced [NADPH--hemoprotein reductase] + O2 = (S)-nornicotine + formaldehyde + oxidized [NADPH--hemoprotein reductase] + H2O + H(+). It functions in the pathway alkaloid biosynthesis; nicotine biosynthesis. Its function is as follows. Involved in the biosynthesis of pyridine alkaloid natural products, leading mainly to the production of anabasine, anatabine, nicotine and nornicotine, effective deterrents against herbivores with antiparasitic and pesticide properties (neurotoxins); nornicotine serves as the precursor in the synthesis of the carcinogen compound N'-nitrosonornicotine (NNN). Catalyzes the demethylation of nicotine to form nornicotine. The polypeptide is Nicotine N-demethylase CYP82E3 (Nicotiana tomentosiformis (Tobacco)).